The chain runs to 89 residues: Small ribosomal subunit protein uS15 (89 aa).

The protein belongs to the universal ribosomal protein uS15 family. In terms of assembly, part of the 30S ribosomal subunit. Forms a bridge to the 50S subunit in the 70S ribosome, contacting the 23S rRNA.

Functionally, one of the primary rRNA binding proteins, it binds directly to 16S rRNA where it helps nucleate assembly of the platform of the 30S subunit by binding and bridging several RNA helices of the 16S rRNA. Its function is as follows. Forms an intersubunit bridge (bridge B4) with the 23S rRNA of the 50S subunit in the ribosome. This Aeromonas hydrophila subsp. hydrophila (strain ATCC 7966 / DSM 30187 / BCRC 13018 / CCUG 14551 / JCM 1027 / KCTC 2358 / NCIMB 9240 / NCTC 8049) protein is Small ribosomal subunit protein uS15.